A 133-amino-acid polypeptide reads, in one-letter code: MAVEKVYQPYDEQVYNSIPKQQPQTKPEKKTVSRKVVVQLTKFEKVLYITLITVIAMLSIYMLSLKMDAYDTRGKIADLDYKIDKQSSENSALQSEIKKNSSYERIYEKAKKQGMSLENDNVKVVRSNGEAKN.

Topologically, residues 1–45 (MAVEKVYQPYDEQVYNSIPKQQPQTKPEKKTVSRKVVVQLTKFEK) are cytoplasmic. A helical membrane pass occupies residues 46-65 (VLYITLITVIAMLSIYMLSL). At 66–133 (KMDAYDTRGK…VVRSNGEAKN (68 aa)) the chain is on the extracellular side.

Belongs to the FtsL family.

The protein resides in the cell membrane. In terms of biological role, essential cell division protein. This is Cell division protein FtsL from Staphylococcus aureus (strain NCTC 8325 / PS 47).